The primary structure comprises 386 residues: Threonine--tRNA ligase editing subunit (386 aa).

The protein belongs to the class-II aminoacyl-tRNA synthetase family. Archaea-specific ThrRS editing domain subfamily. In terms of assembly, probably interacts with its catalytic subunit (AC Q97VW8); a subunit fusion (in the order edit-catalytic) is fully functional.

It localises to the cytoplasm. Its function is as follows. Freestanding tRNA editing subunit of threonine--tRNA ligase, the catalytic subunit is AC Q97VW8. Deacylates (edits) mischarged L-seryl-tRNA(Thr) in trans, removing L-serine, has no aminoacylation activity. In vitro when both subunits are present, or if the 2 subunits are fused, L-seryl-tRNA(Thr) is no longer produced. Has no activity on correctly acylated L-seryl-tRNA(Ser) or L-threonyl-tRNA(Thr). Editing is probably catalyzed by the 2'-OH of A76 of tRNA(Thr). The polypeptide is Threonine--tRNA ligase editing subunit (Saccharolobus solfataricus (strain ATCC 35092 / DSM 1617 / JCM 11322 / P2) (Sulfolobus solfataricus)).